Consider the following 34-residue polypeptide: Sarcoplasmic/endoplasmic reticulum calcium ATPase regulator DWORF (34 aa).

The chain crosses the membrane as a helical span at residues 12 to 32 (IVPILLLVGWIVGCIIVIYIV).

As to quaternary structure, homooligomer. Can also form heterooligomers with other sarcoplasmic/endoplasmic reticulum calcium ATPase (SERCA) regulators ARLN, ERLN, PLN and SLN. Monomer. Interacts with ATP2A1/SERCA1; the interaction results in activation of ATP2A1. Interacts as a monomer with ATP2A2/SERCA2; the interaction results in activation of ATP2A2. As to expression, highly expressed in heart (at protein level). Detected in heart and soleus, a postural muscle group of the hindlimb containing the highest enrichment of slow-twitch muscle fibers. Also expressed in diaphragm, which contains some slow-twitch fibers. Not detected in the quadriceps, a fast-twitch muscle group, or in cardiac atrial muscle. Not expressed in the prenatal heart but gradually increases in abundance postnatally.

Its subcellular location is the sarcoplasmic reticulum membrane. Enhances the activity of ATP2A1/SERCA1 ATPase in sarcoplasmic reticulum by displacing ATP2A1/SERCA1 inhibitors, thereby acting as a key regulator of skeletal muscle activity. Also enhances the activity of the ATP2A2/SERCA2 ATPase. Does not directly stimulate SERCA pump activity. Binds preferentially to the phosphorylated E1 and E2 conformational forms of ATP2A2 which predominate at high Ca(2+) concentrations during the systolic phase of the cardiac cycle. Competes with ATP2A2 inhibitor phospholamban (PLN) for binding to ATP2A2 and displaces PLN. Can activate ATP2A2 directly in the absence of PLN. Also enhances sarcoplasmic reticulum Ca(2+) uptake and myocyte contractility by displacing the SERCA inhibitory peptides sarcolipin (SLN) and myoregulin (MRLN). In Mus musculus (Mouse), this protein is Sarcoplasmic/endoplasmic reticulum calcium ATPase regulator DWORF.